The sequence spans 297 residues: MVPYQELTLQRSFSYNSRKINPVTSPARSSHVRSPSSSALIPSIPEHELFLVPCRRCSYVPLSSSSSASHNIGKFHLKFSLLLRSFINIINIPACKMLSLPSPPSSSSSVSNQLISLVTGGSSSLGRRVTGTLYGHKRGHVTFSVQYNQRSDPVLLLDLAMSTATLVKEMSSGLVRIALECEKRHRSGTKLFQEPKWTMYCNGRKCGYAVSRGGACTDTDWRVLNTVSRVTVGAGVIPTPKTIDDVSGVGSGTELGELLYMRGKFERVVGSRDSEAFYMMNPDKNGGPELSIFLLRI.

In terms of tissue distribution, expressed in root meristematic region, cortical cells, lateral root cap cells, columella cells of the root cap, mature region of the roots and leaf hydathodes.

It localises to the endoplasmic reticulum membrane. In terms of biological role, plays a role in lateral root development by maintaining auxin levels. This function requires GNOM (GN/MIZ2) activity. Negatively regulates cytokinin sensitivity on root development. Positively regulates hydrotropism in roots. The chain is Protein MIZU-KUSSEI 1 (MIZ1) from Arabidopsis thaliana (Mouse-ear cress).